Here is a 442-residue protein sequence, read N- to C-terminus: Trigger factor (442 aa).

In terms of domain architecture, PPIase FKBP-type spans 165-250 (DDRVIIDFEG…LQKVMAPELP (86 aa)).

This sequence belongs to the FKBP-type PPIase family. Tig subfamily.

Its subcellular location is the cytoplasm. The catalysed reaction is [protein]-peptidylproline (omega=180) = [protein]-peptidylproline (omega=0). Involved in protein export. Acts as a chaperone by maintaining the newly synthesized protein in an open conformation. Functions as a peptidyl-prolyl cis-trans isomerase. This is Trigger factor from Coxiella burnetii (strain CbuK_Q154) (Coxiella burnetii (strain Q154)).